Consider the following 342-residue polypeptide: ATPase asna-1 (342 aa).

Residue 26-33 coordinates ATP; sequence KGGVGKTT. Asp-55 is an active-site residue. Residues Glu-243 and Asn-270 each contribute to the ATP site. Cys-285 and Cys-288 together coordinate Zn(2+).

The protein belongs to the arsA ATPase family. As to quaternary structure, homodimer.

The protein resides in the cytoplasm. Its subcellular location is the endoplasmic reticulum. ATPase required for the post-translational delivery of tail-anchored (TA) proteins to the endoplasmic reticulum. Recognizes and selectively binds the transmembrane domain of TA proteins in the cytosol. This complex then targets to the endoplasmic reticulum by membrane-bound receptors, where the tail-anchored protein is released for insertion. This process is regulated by ATP binding and hydrolysis. ATP binding drives the homodimer towards the closed dimer state, facilitating recognition of newly synthesized TA membrane proteins. ATP hydrolysis is required for insertion. Subsequently, the homodimer reverts towards the open dimer state, lowering its affinity for the membrane-bound receptor, and returning it to the cytosol to initiate a new round of targeting. May be involved in insulin signaling. The sequence is that of ATPase asna-1 from Caenorhabditis elegans.